We begin with the raw amino-acid sequence, 172 residues long: 16S rRNA aminocarboxypropyltransferase (172 aa).

S-adenosyl-L-methionine contacts are provided by Thr21, Leu71, Leu93, and Thr112.

This sequence belongs to the TDD superfamily. TSR3 family.

It localises to the cytoplasm. It catalyses the reaction an N(1)-methylpseudouridine in rRNA + S-adenosyl-L-methionine = N(1)-methyl-N(3)-[(3S)-3-amino-3-carboxypropyl]pseudouridine in rRNA + S-methyl-5'-thioadenosine + H(+). Aminocarboxypropyltransferase that catalyzes the aminocarboxypropyl transfer on pseudouridine at position 914 in 16S rRNA. It constitutes the last step in biosynthesis of the hypermodified N1-methyl-N3-(3-amino-3-carboxypropyl) pseudouridine (m1acp3-Psi). This Methanocaldococcus jannaschii (strain ATCC 43067 / DSM 2661 / JAL-1 / JCM 10045 / NBRC 100440) (Methanococcus jannaschii) protein is 16S rRNA aminocarboxypropyltransferase.